The sequence spans 319 residues: Aspartate carbamoyltransferase catalytic subunit (319 aa).

Residues Arg-57 and Thr-58 each coordinate carbamoyl phosphate. Position 85 (Lys-85) interacts with L-aspartate. Positions 107, 135, and 138 each coordinate carbamoyl phosphate. Residues Arg-168 and Arg-222 each contribute to the L-aspartate site. 2 residues coordinate carbamoyl phosphate: Gly-263 and Pro-264.

This sequence belongs to the aspartate/ornithine carbamoyltransferase superfamily. ATCase family. In terms of assembly, heterododecamer (2C3:3R2) of six catalytic PyrB chains organized as two trimers (C3), and six regulatory PyrI chains organized as three dimers (R2).

It carries out the reaction carbamoyl phosphate + L-aspartate = N-carbamoyl-L-aspartate + phosphate + H(+). Its pathway is pyrimidine metabolism; UMP biosynthesis via de novo pathway; (S)-dihydroorotate from bicarbonate: step 2/3. Its function is as follows. Catalyzes the condensation of carbamoyl phosphate and aspartate to form carbamoyl aspartate and inorganic phosphate, the committed step in the de novo pyrimidine nucleotide biosynthesis pathway. This Paracoccus denitrificans (strain Pd 1222) protein is Aspartate carbamoyltransferase catalytic subunit.